We begin with the raw amino-acid sequence, 167 residues long: Mediator of RNA polymerase II transcription subunit 10 (167 aa).

Residues Ser54–Gln92 form a disordered region. Residues His60–Thr70 show a composition bias toward pro residues.

It belongs to the Mediator complex subunit 10 family. In terms of assembly, component of the Mediator complex.

It is found in the nucleus. In terms of biological role, component of the Mediator complex, a coactivator involved in the regulated transcription of nearly all RNA polymerase II-dependent genes. Mediator functions as a bridge to convey information from gene-specific regulatory proteins to the basal RNA polymerase II transcription machinery. Mediator is recruited to promoters by direct interactions with regulatory proteins and serves as a scaffold for the assembly of a functional preinitiation complex with RNA polymerase II and the general transcription factors. The polypeptide is Mediator of RNA polymerase II transcription subunit 10 (nut2) (Aspergillus clavatus (strain ATCC 1007 / CBS 513.65 / DSM 816 / NCTC 3887 / NRRL 1 / QM 1276 / 107)).